Here is a 78-residue protein sequence, read N- to C-terminus: MAERSQNLQDLFLNSVRKQKISLTIFLINGVKLTGIVTSFDNFCVLLRRDGHSQLVYKHAISTIMPSQPVQMFEGEEA.

One can recognise a Sm domain in the interval 10–70 (DLFLNSVRKQ…ISTIMPSQPV (61 aa)).

This sequence belongs to the Hfq family. In terms of assembly, homohexamer.

Its function is as follows. RNA chaperone that binds small regulatory RNA (sRNAs) and mRNAs to facilitate mRNA translational regulation in response to envelope stress, environmental stress and changes in metabolite concentrations. Also binds with high specificity to tRNAs. The protein is RNA-binding protein Hfq of Brucella abortus (strain S19).